The primary structure comprises 267 residues: Glucosamine-6-phosphate deaminase (267 aa).

Asp-72 acts as the Proton acceptor; for enolization step in catalysis. Asp-141 serves as the catalytic For ring-opening step. His-143 (proton acceptor; for ring-opening step) is an active-site residue. Glu-148 serves as the catalytic For ring-opening step.

It belongs to the glucosamine/galactosamine-6-phosphate isomerase family. NagB subfamily. As to quaternary structure, homohexamer.

The catalysed reaction is alpha-D-glucosamine 6-phosphate + H2O = beta-D-fructose 6-phosphate + NH4(+). The protein operates within amino-sugar metabolism; N-acetylneuraminate degradation; D-fructose 6-phosphate from N-acetylneuraminate: step 5/5. Allosterically activated by N-acetylglucosamine 6-phosphate (GlcNAc6P). Its function is as follows. Catalyzes the reversible isomerization-deamination of glucosamine 6-phosphate (GlcN6P) to form fructose 6-phosphate (Fru6P) and ammonium ion. The sequence is that of Glucosamine-6-phosphate deaminase from Pasteurella multocida (strain Pm70).